A 323-amino-acid chain; its full sequence is tRNA U34 carboxymethyltransferase (323 aa).

Carboxy-S-adenosyl-L-methionine contacts are provided by residues lysine 91, tryptophan 105, lysine 110, glycine 130, 152–154 (DPT), 181–182 (IE), methionine 196, tyrosine 200, and arginine 315.

It belongs to the class I-like SAM-binding methyltransferase superfamily. CmoB family. As to quaternary structure, homotetramer.

It catalyses the reaction carboxy-S-adenosyl-L-methionine + 5-hydroxyuridine(34) in tRNA = 5-carboxymethoxyuridine(34) in tRNA + S-adenosyl-L-homocysteine + H(+). Catalyzes carboxymethyl transfer from carboxy-S-adenosyl-L-methionine (Cx-SAM) to 5-hydroxyuridine (ho5U) to form 5-carboxymethoxyuridine (cmo5U) at position 34 in tRNAs. In Cronobacter sakazakii (strain ATCC BAA-894) (Enterobacter sakazakii), this protein is tRNA U34 carboxymethyltransferase.